Consider the following 505-residue polypeptide: RNA-splicing ligase RtcB homolog (505 aa).

Mn(2+) contacts are provided by Asp-119, Cys-122, His-227, and His-259. Position 226 to 230 (226 to 230 (NHYAE)) interacts with GMP. Phosphoserine is present on Ser-300. His-353 is a Mn(2+) binding site. GMP contacts are provided by residues 353 to 354 (HN), 402 to 405 (GGTM), Ser-409, and 428 to 431 (HGAG). His-428 functions as the GMP-histidine intermediate in the catalytic mechanism. Lys-496 participates in a covalent cross-link: Glycyl lysine isopeptide (Lys-Gly) (interchain with G-Cter in SUMO2). Position 504 (Lys-504) interacts with GMP.

The protein belongs to the RtcB family. In terms of assembly, catalytic component of the tRNA-splicing ligase complex. It depends on Mn(2+) as a cofactor.

It is found in the nucleus. The protein resides in the cytoplasm. The catalysed reaction is a 3'-end 3'-phospho-ribonucleotide-RNA + a 5'-end dephospho-ribonucleoside-RNA + GTP = a ribonucleotidyl-ribonucleotide-RNA + GMP + diphosphate. It carries out the reaction a 3'-end 2',3'-cyclophospho-ribonucleotide-RNA + a 5'-end dephospho-ribonucleoside-RNA + GTP + H2O = a ribonucleotidyl-ribonucleotide-RNA + GMP + diphosphate + H(+). Its activity is regulated as follows. Protein archease stimulates the activity of the tRNA ligase complex with high efficiency in the presence of GTP. Functionally, catalytic subunit of the tRNA-splicing ligase complex that acts by directly joining spliced tRNA halves to mature-sized tRNAs by incorporating the precursor-derived splice junction phosphate into the mature tRNA as a canonical 3',5'-phosphodiester. May act as an RNA ligase with broad substrate specificity, and may function toward other RNAs. This Homo sapiens (Human) protein is RNA-splicing ligase RtcB homolog.